Reading from the N-terminus, the 215-residue chain is MLGEIQDKVYKGTTTVGLVCKDGVVLATEKRATMGNFIASRRAKKIYRIADRVAMTTAGAVGDAQFLARLISVEIKLYEIRKEEKPTVKAIATLLSNILNSVRWFPYFVQLLVGGVDKRGPSIYSIDLLGGAIEEIDIVATGSGSPTAYGVLEDRYTPEITVDDGVELAVRAIYSAMRRDSASGDGIDVVKITKDGYFELSKEEVDKILSSLRRA.

The propeptide at 1–12 (MLGEIQDKVYKG) is removed in mature form; by autocatalysis. Threonine 13 functions as the Nucleophile in the catalytic mechanism.

It belongs to the peptidase T1B family. In terms of assembly, the 20S proteasome core is composed of 14 alpha and 14 beta subunits that assemble into four stacked heptameric rings, resulting in a barrel-shaped structure. The two inner rings, each composed of seven catalytic beta subunits, are sandwiched by two outer rings, each composed of seven alpha subunits. The catalytic chamber with the active sites is on the inside of the barrel. Has a gated structure, the ends of the cylinder being occluded by the N-termini of the alpha-subunits. Is capped at one or both ends by the proteasome regulatory ATPase, PAN.

The protein resides in the cytoplasm. It catalyses the reaction Cleavage of peptide bonds with very broad specificity.. With respect to regulation, the formation of the proteasomal ATPase PAN-20S proteasome complex, via the docking of the C-termini of PAN into the intersubunit pockets in the alpha-rings, triggers opening of the gate for substrate entry. Interconversion between the open-gate and close-gate conformations leads to a dynamic regulation of the 20S proteasome proteolysis activity. Functionally, component of the proteasome core, a large protease complex with broad specificity involved in protein degradation. This is Proteasome subunit beta from Archaeoglobus profundus (strain DSM 5631 / JCM 9629 / NBRC 100127 / Av18).